The sequence spans 217 residues: tRNA (guanine-N(7)-)-methyltransferase (217 aa).

S-adenosyl-L-methionine contacts are provided by E43, D68, N101, and N123. K127 contacts substrate. The interval 129–134 is interaction with RNA; the sequence is RHNKRR. Residues D159 and 196–199 each bind substrate; that span reads TEYE.

It belongs to the class I-like SAM-binding methyltransferase superfamily. TrmB family.

The catalysed reaction is guanosine(46) in tRNA + S-adenosyl-L-methionine = N(7)-methylguanosine(46) in tRNA + S-adenosyl-L-homocysteine. It participates in tRNA modification; N(7)-methylguanine-tRNA biosynthesis. Functionally, catalyzes the formation of N(7)-methylguanine at position 46 (m7G46) in tRNA. The polypeptide is tRNA (guanine-N(7)-)-methyltransferase (Clostridium botulinum (strain 657 / Type Ba4)).